We begin with the raw amino-acid sequence, 252 residues long: Adenosylcobinamide-GDP ribazoletransferase (252 aa).

7 helical membrane-spanning segments follow: residues 4-24, 35-55, 65-85, 102-122, 178-198, 201-221, and 232-252; these read LLLLNLLASIIFYTSIPLPYI, LVPMVGLIIGVILGLLDGGMN, SALVVALWIFITGGLHLDGAM, VMADSATGAFGAMSAIAILLL, LLPGLCLMVAVSSLFWLVNNH, LITVVGLITGSAIASLTAAWF, and TYGAVVEWTEALFLCVLTILT.

This sequence belongs to the CobS family. The cofactor is Mg(2+).

The protein resides in the cell inner membrane. It carries out the reaction alpha-ribazole + adenosylcob(III)inamide-GDP = adenosylcob(III)alamin + GMP + H(+). The enzyme catalyses alpha-ribazole 5'-phosphate + adenosylcob(III)inamide-GDP = adenosylcob(III)alamin 5'-phosphate + GMP + H(+). The protein operates within cofactor biosynthesis; adenosylcobalamin biosynthesis; adenosylcobalamin from cob(II)yrinate a,c-diamide: step 7/7. Joins adenosylcobinamide-GDP and alpha-ribazole to generate adenosylcobalamin (Ado-cobalamin). Also synthesizes adenosylcobalamin 5'-phosphate from adenosylcobinamide-GDP and alpha-ribazole 5'-phosphate. In Trichormus variabilis (strain ATCC 29413 / PCC 7937) (Anabaena variabilis), this protein is Adenosylcobinamide-GDP ribazoletransferase.